We begin with the raw amino-acid sequence, 136 residues long: MYPLEVVTPEGIVFKGEVEQTVINTADGEIGILENHMLLLTNVVPGKLRIEIPEEEPKEYAVTHGVIDVRGDKVIVLVEEAFGISEIDVEREKRLLEEAKAKLEERETLSLEEIENYERMKERAEILLELAGVKVR.

It belongs to the ATPase epsilon chain family. As to quaternary structure, F-type ATPases have 2 components, CF(1) - the catalytic core - and CF(0) - the membrane proton channel. CF(1) has five subunits: alpha(3), beta(3), gamma(1), delta(1), epsilon(1). CF(0) has three main subunits: a, b and c.

It is found in the cell inner membrane. Produces ATP from ADP in the presence of a proton gradient across the membrane. The polypeptide is ATP synthase epsilon chain (Persephonella marina (strain DSM 14350 / EX-H1)).